Here is a 301-residue protein sequence, read N- to C-terminus: ATP synthase gamma chain (301 aa).

This sequence belongs to the ATPase gamma chain family. As to quaternary structure, F-type ATPases have 2 components, CF(1) - the catalytic core - and CF(0) - the membrane proton channel. CF(1) has five subunits: alpha(3), beta(3), gamma(1), delta(1), epsilon(1). CF(0) has three main subunits: a, b and c.

It is found in the cell inner membrane. Functionally, produces ATP from ADP in the presence of a proton gradient across the membrane. The gamma chain is believed to be important in regulating ATPase activity and the flow of protons through the CF(0) complex. The protein is ATP synthase gamma chain of Helicobacter pylori (strain J99 / ATCC 700824) (Campylobacter pylori J99).